Reading from the N-terminus, the 262-residue chain is Regulatory protein RecX (262 aa).

It belongs to the RecX family.

The protein resides in the cytoplasm. In terms of biological role, modulates RecA activity. In Photobacterium profundum (strain SS9), this protein is Regulatory protein RecX.